A 321-amino-acid chain; its full sequence is Ribosomal RNA small subunit methyltransferase H (321 aa).

S-adenosyl-L-methionine is bound by residues 40-42 (GGH), Asp60, Phe84, Asp106, and Gln113.

It belongs to the methyltransferase superfamily. RsmH family.

It is found in the cytoplasm. It carries out the reaction cytidine(1402) in 16S rRNA + S-adenosyl-L-methionine = N(4)-methylcytidine(1402) in 16S rRNA + S-adenosyl-L-homocysteine + H(+). In terms of biological role, specifically methylates the N4 position of cytidine in position 1402 (C1402) of 16S rRNA. The sequence is that of Ribosomal RNA small subunit methyltransferase H from Pasteurella multocida (strain Pm70).